The chain runs to 565 residues: MKRTVISSSNAYASKRSRLDIEHDFEQYHSLNKKYYPRPITRTGANQFNNKSRAKPMEIVEKLQKKQKTSFENVSTVMHWFRNDLRLYDNVGLYKSVALFQQLRQKNAKAKLYAVYVINEDDWRAHMDSGWKLMFIMGALKNLQQSLAELHIPLLLWEFHTPKSTLSNSKEFVEFFKEKCMNVSSGTGTIITANIEYQTDELYRDIRLLENEDHRLQLKYYHDSCIVAPGLITTDRGTNYSVFTPWYKKWVLYVNNYKKSTSEICHLHIIEPLKYNETFELKPFQYSLPDEFLQYIPKSKWCLPDVSEEAALSRLKDFLGTKSSKYNNEKDMLYLGGTSGLSVYITTGRISTRLIVNQAFQSCNGQIMSKALKDNSSTQNFIKEVAWRDFYRHCMCNWPYTSMGMPYRLDTLDIKWENNPVAFEKWCTGNTGIPIVDAIMRKLLYTGYINNRSRMITASFLSKNLLIDWRWGERWFMKHLIDGDSSSNVGGWGFCSSTGIDAQPYFRVFNMDIQAKKYDPQMIFVKQWVPELISSENKRPENYPKPLVDLKHSRERALKVYKDAM.

The Photolyase/cryptochrome alpha/beta domain maps to 75-226 (STVMHWFRND…QLKYYHDSCI (152 aa)). Residues Y326 and 338–342 (TSGLS) contribute to the FAD site. 2 interaction with DNA regions span residues 384–391 (EVAWRDFY) and 451–452 (NR). Position 482 to 484 (482 to 484 (DGD)) interacts with FAD. A DNA-binding site is contributed by Q514.

It belongs to the DNA photolyase class-1 family. As to quaternary structure, monomer. FAD serves as cofactor. The cofactor is (6R)-5,10-methylene-5,6,7,8-tetrahydrofolate.

The protein localises to the nucleus. It is found in the mitochondrion. The catalysed reaction is cyclobutadipyrimidine (in DNA) = 2 pyrimidine residues (in DNA).. Involved in repair of UV radiation-induced DNA damage. Catalyzes the light-dependent monomerization (300-600 nm) of cyclobutyl pyrimidine dimers (in cis-syn configuration), which are formed between adjacent bases on the same DNA strand upon exposure to ultraviolet radiation. In Saccharomyces cerevisiae (strain ATCC 204508 / S288c) (Baker's yeast), this protein is Deoxyribodipyrimidine photo-lyase, mitochondrial (PHR1).